A 119-amino-acid polypeptide reads, in one-letter code: Protein TusC (119 aa).

It belongs to the DsrF/TusC family. Heterohexamer, formed by a dimer of trimers. The hexameric TusBCD complex contains 2 copies each of TusB, TusC and TusD. The TusBCD complex interacts with TusE.

The protein resides in the cytoplasm. In terms of biological role, part of a sulfur-relay system required for 2-thiolation of 5-methylaminomethyl-2-thiouridine (mnm(5)s(2)U) at tRNA wobble positions. In Pectobacterium atrosepticum (strain SCRI 1043 / ATCC BAA-672) (Erwinia carotovora subsp. atroseptica), this protein is Protein TusC.